We begin with the raw amino-acid sequence, 695 residues long: MAP kinase phosphatase with leucine-rich repeats protein 2 (695 aa).

10 LRR repeats span residues 101 to 122 (SLKSLILDFNKITEIPDCITLL), 124 to 145 (NLNHLSLAANQLTHVPEFLSQL), 147 to 167 (SLETFEIGINQFTCFPLNVCK), 170 to 191 (SLTSLHLETNNIKSLPEEFLNL), 193 to 214 (NLKDLSLFDNQLKEIPDSLPNN), 215 to 235 (IEKLNLGCNDISSSKSDSLIR), 239 to 260 (SLTTLNLSENKIEELDESLSCL), 262 to 283 (NVKTLMLDCNMIKVIPGSVLGS), 286 to 307 (SLVTLNLPHNLISDLPPEVILL), and 309 to 330 (NLRIIDLRGNNFENCKKLIPTE). The segment covering 413-426 (SENNEINENNQLLT) has biased composition (low complexity). Disordered stretches follow at residues 413 to 438 (SENNEINENNQLLTTDDDYNTDKNDS) and 492 to 519 (QEQLPQSKPENEKLTNIPEQQQKQQQQQ). A Tyrosine-protein phosphatase domain is found at 556-695 (VPDLIIDKLY…LKKFEKDLFK (140 aa)). C639 (phosphocysteine intermediate) is an active-site residue.

The protein belongs to the protein-tyrosine phosphatase family. Non-receptor class dual specificity subfamily.

It carries out the reaction O-phospho-L-tyrosyl-[protein] + H2O = L-tyrosyl-[protein] + phosphate. The enzyme catalyses O-phospho-L-seryl-[protein] + H2O = L-seryl-[protein] + phosphate. The catalysed reaction is O-phospho-L-threonyl-[protein] + H2O = L-threonyl-[protein] + phosphate. In terms of biological role, probable phosphatase with dual specificity toward Ser/Thr and Tyr-containing proteins. This chain is MAP kinase phosphatase with leucine-rich repeats protein 2 (mpl2), found in Dictyostelium discoideum (Social amoeba).